The chain runs to 356 residues: MLKVPLSDVLSQKMLFLKSFRYFHCTKYFSRDNASSTTDIFRNAMKRKRELANLKEQSHGNVARNAAFPKEYIKRPKQVPRNATNRKKILITWSTGTDRAKEAANSVVSEIFKKNHKGNIKVVDPTTHRIEPSNIRYFAKGIDLDKVGLSIVNVEQIDNENQIPLVKIIESRVALKKYSDFLAKKKEKELMELGVLNKSYKNLVTDKKEDNLKHIKISWQIESDDLKRQKAHEIVSLLKKGNKVTLYLDDKNNINSNNWLENFEELDRSQKGEPPRLPESVFQKRAAVLETLKEIVSEYANDPVLLGNMNSKMIMKLIPKDVKPQNNDKRALKELRKKERQEKLQKRIQRKKMNEM.

A mitochondrion-targeting transit peptide spans 1-32 (MLKVPLSDVLSQKMLFLKSFRYFHCTKYFSRD).

It belongs to the AIM23 family.

The protein resides in the mitochondrion. This chain is Altered inheritance of mitochondria protein 23, mitochondrial (AIM23), found in Saccharomyces cerevisiae (strain RM11-1a) (Baker's yeast).